The primary structure comprises 462 residues: G-patch domain and KOW motifs-containing protein homolog 1 (462 aa).

Disordered stretches follow at residues 1–26 (MVEQ…KREE) and 182–218 (LKLP…EEEK). The G-patch domain occupies 154–202 (IESFGLAILRGCNWKDGDGIGKNPQKVALKLPNRRPPGLGLGATPKNPV). The KOW 1 domain maps to 221–248 (EIKVGSFIKVVDGRNKGVYGKVEGRDDD). Over residues 289-305 (EYDKEKDRLETERKKLE) the composition is skewed to basic and acidic residues. A disordered region spans residues 289-337 (EYDKEKDRLETERKKLESQPPSTSTSQSSKDYKSKSSSSKHDKNSSEYE). Residues 306 to 317 (SQPPSTSTSQSS) show a composition bias toward low complexity. Over residues 318 to 337 (KDYKSKSSSSKHDKNSSEYE) the composition is skewed to basic and acidic residues. Positions 401–428 (PREIGEKLMIVAGKRSGQLAVMLDKDKR) constitute a KOW 2 domain.

Belongs to the MOS2 family.

Its subcellular location is the nucleus. This chain is G-patch domain and KOW motifs-containing protein homolog 1, found in Caenorhabditis elegans.